A 337-amino-acid polypeptide reads, in one-letter code: DNA-directed RNA polymerase subunit alpha (337 aa).

The segment at 1–233 is alpha N-terminal domain (alpha-NTD); it reads MVREEVVGST…DLFIPFLHAE (233 aa). Residues 265–337 form an alpha C-terminal domain (alpha-CTD) region; sequence KEIALKCIFI…FAIDLPKNKF (73 aa).

This sequence belongs to the RNA polymerase alpha chain family. In terms of assembly, in plastids the minimal PEP RNA polymerase catalytic core is composed of four subunits: alpha, beta, beta', and beta''. When a (nuclear-encoded) sigma factor is associated with the core the holoenzyme is formed, which can initiate transcription.

It is found in the plastid. It localises to the chloroplast. The enzyme catalyses RNA(n) + a ribonucleoside 5'-triphosphate = RNA(n+1) + diphosphate. Functionally, DNA-dependent RNA polymerase catalyzes the transcription of DNA into RNA using the four ribonucleoside triphosphates as substrates. This Acorus gramineus (Dwarf sweet flag) protein is DNA-directed RNA polymerase subunit alpha.